The chain runs to 85 residues: MKVTLIAILTCAAVLVLHTTAAEELEAESQLMEVGMPDTELEAVDEERLFECSVSCEIEKEGNKDCKKKKCKGGWKCKFNMCVKV.

Residues 1–22 (MKVTLIAILTCAAVLVLHTTAA) form the signal peptide. Positions 23–48 (EELEAESQLMEVGMPDTELEAVDEER) are excised as a propeptide. 3 cysteine pairs are disulfide-bonded: Cys52-Cys66, Cys56-Cys77, and Cys71-Cys82.

The protein belongs to the neurotoxin 12 (Hwtx-2) family. 02 (Hwtx-2) subfamily. In terms of assembly, monomer. In terms of tissue distribution, expressed by the venom gland.

It is found in the secreted. Neurotoxin active on both insects and mammals. The chain is U4-theraphotoxin-Hhn1a from Cyriopagopus hainanus (Chinese bird spider).